A 254-amino-acid chain; its full sequence is Triosephosphate isomerase (254 aa).

9 to 11 is a binding site for substrate; it reads NWK. H98 serves as the catalytic Electrophile. Catalysis depends on E170, which acts as the Proton acceptor. Residues G176, S215, and 236–237 contribute to the substrate site; that span reads GG.

The protein belongs to the triosephosphate isomerase family. As to quaternary structure, homodimer.

The protein resides in the cytoplasm. The enzyme catalyses D-glyceraldehyde 3-phosphate = dihydroxyacetone phosphate. Its pathway is carbohydrate biosynthesis; gluconeogenesis. It participates in carbohydrate degradation; glycolysis; D-glyceraldehyde 3-phosphate from glycerone phosphate: step 1/1. In terms of biological role, involved in the gluconeogenesis. Catalyzes stereospecifically the conversion of dihydroxyacetone phosphate (DHAP) to D-glyceraldehyde-3-phosphate (G3P). This is Triosephosphate isomerase from Buchnera aphidicola subsp. Cinara cedri (strain Cc).